A 431-amino-acid chain; its full sequence is Histidine--tRNA ligase (431 aa).

Belongs to the class-II aminoacyl-tRNA synthetase family. In terms of assembly, homodimer.

It is found in the cytoplasm. It carries out the reaction tRNA(His) + L-histidine + ATP = L-histidyl-tRNA(His) + AMP + diphosphate + H(+). The sequence is that of Histidine--tRNA ligase from Neisseria meningitidis serogroup A / serotype 4A (strain DSM 15465 / Z2491).